We begin with the raw amino-acid sequence, 444 residues long: Signal recognition particle 54 kDa protein (444 aa).

Residues 106 to 113 (GLQGSGKT), 187 to 191 (DTAGR), and 245 to 248 (SKLD) each bind GTP.

Belongs to the GTP-binding SRP family. SRP54 subfamily. As to quaternary structure, part of the signal recognition particle protein translocation system, which is composed of SRP and FtsY. Archaeal SRP consists of a 7S RNA molecule of 300 nucleotides and two protein subunits: SRP54 and SRP19.

The protein resides in the cytoplasm. The catalysed reaction is GTP + H2O = GDP + phosphate + H(+). Involved in targeting and insertion of nascent membrane proteins into the cytoplasmic membrane. Binds to the hydrophobic signal sequence of the ribosome-nascent chain (RNC) as it emerges from the ribosomes. The SRP-RNC complex is then targeted to the cytoplasmic membrane where it interacts with the SRP receptor FtsY. This Methanosphaera stadtmanae (strain ATCC 43021 / DSM 3091 / JCM 11832 / MCB-3) protein is Signal recognition particle 54 kDa protein.